We begin with the raw amino-acid sequence, 582 residues long: PCNA-interacting partner (582 aa).

Composition is skewed to polar residues over residues 471–487 (GVNS…SSGN) and 501–510 (KSSSLTGNTS). The disordered stretch occupies residues 471 to 514 (GVNSSVGRPTIGTSSGNVHLGRSEKEKVARKSSSLTGNTSSKRK).

Belongs to the PARI family. Interacts with RAD51 and PCNA. Interacts with PARP1. Interacts with TASOR.

The protein localises to the cytoplasm. Its subcellular location is the nucleus. Required to suppress inappropriate homologous recombination, thereby playing a central role DNA repair and in the maintenance of genomic stability. Antagonizes homologous recombination by interfering with the formation of the RAD51-DNA homologous recombination structure. Binds single-strand DNA and poly(A) homopolymers. Positively regulate the poly(ADP-ribosyl)ation activity of PARP1; however such function may be indirect. In Bos taurus (Bovine), this protein is PCNA-interacting partner (PARPBP).